The primary structure comprises 58 residues: Conotoxin Im5.4 (58 aa).

Positions 1 to 18 (MRCLPVVVFLLLLLSAAA) are cleaved as a signal peptide. Residues 19–28 (APGVGSKTER) constitute a propeptide that is removed on maturation.

The protein belongs to the conotoxin T superfamily. Post-translationally, contains 2 disulfide bonds that can be either 'C1-C3, C2-C4' or 'C1-C4, C2-C3', since these disulfide connectivities have been observed for conotoxins with cysteine framework V (for examples, see AC P0DQQ7 and AC P81755). In terms of tissue distribution, expressed by the venom duct.

The protein localises to the secreted. Functionally, probable neurotoxin. In Conus imperialis (Imperial cone), this protein is Conotoxin Im5.4.